Here is a 367-residue protein sequence, read N- to C-terminus: Adenine deaminase (367 aa).

Residues H19, H21, and H209 each coordinate Zn(2+). The Proton donor role is filled by E212. D290 lines the Zn(2+) pocket. D291 provides a ligand contact to substrate.

This sequence belongs to the metallo-dependent hydrolases superfamily. Adenosine and AMP deaminases family. Adenine deaminase type 2 subfamily. Zn(2+) is required as a cofactor.

The protein localises to the cytoplasm. Its subcellular location is the nucleus. It catalyses the reaction adenine + H2O + H(+) = hypoxanthine + NH4(+). Its function is as follows. Catalyzes the hydrolytic deamination of adenine to hypoxanthine. Plays an important role in the purine salvage pathway and in nitrogen catabolism. Also exhibits a low activity towards N(6)-substituted adenines that are commonly known as the plant hormones cytokinins. The sequence is that of Adenine deaminase from Schizosaccharomyces pombe (strain 972 / ATCC 24843) (Fission yeast).